A 682-amino-acid chain; its full sequence is Probable glycosyl transferase Gly (682 aa).

UDP is bound by residues 21–26 (CASFSD) and 112–113 (DC). Residues aspartate 112, aspartate 114, and histidine 230 each coordinate Mn(2+). 230 to 236 (HYLPERK) is a binding site for UDP.

It belongs to the glycosyltransferase 8 family. As to quaternary structure, part of the accessory SecA2/SecY2 protein translocation apparatus required to export cell wall protein GspB.

Its function is as follows. Part of the accessory SecA2/SecY2 system specifically required to export GspB, a serine-rich repeat cell wall protein encoded upstream in the same operon. This is Probable glycosyl transferase Gly (gly) from Streptococcus gordonii.